A 304-amino-acid polypeptide reads, in one-letter code: N-acetyl-D-glucosamine kinase (304 aa).

ATP is bound by residues 4–11 and 133–140; these read GFDMGGTK and GLGGGLVI. 4 residues coordinate Zn(2+): His-157, Cys-177, Cys-179, and Cys-184.

The protein belongs to the ROK (NagC/XylR) family. NagK subfamily.

It catalyses the reaction N-acetyl-D-glucosamine + ATP = N-acetyl-D-glucosamine 6-phosphate + ADP + H(+). Its pathway is cell wall biogenesis; peptidoglycan recycling. Functionally, catalyzes the phosphorylation of N-acetyl-D-glucosamine (GlcNAc) derived from cell-wall degradation, yielding GlcNAc-6-P. In Pectobacterium carotovorum subsp. carotovorum (strain PC1), this protein is N-acetyl-D-glucosamine kinase.